We begin with the raw amino-acid sequence, 94 residues long: Small ribosomal subunit protein bS18 (94 aa).

Residues 1 to 12 (MSEQNSRPQNSE) show a composition bias toward low complexity. Residues 1-29 (MSEQNSRPQNSERPQRSRRPQGGPRRRRK) form a disordered region. A compositionally biased stretch (basic residues) spans 16 to 29 (RSRRPQGGPRRRRK).

The protein belongs to the bacterial ribosomal protein bS18 family. As to quaternary structure, part of the 30S ribosomal subunit. Forms a tight heterodimer with protein bS6.

In terms of biological role, binds as a heterodimer with protein bS6 to the central domain of the 16S rRNA, where it helps stabilize the platform of the 30S subunit. The polypeptide is Small ribosomal subunit protein bS18 (Leuconostoc citreum (strain KM20)).